A 386-amino-acid polypeptide reads, in one-letter code: Microtubule-binding protein TANGLED1 (386 aa).

Disordered regions lie at residues 83-105 (RMRGGASAQKRSPSGKFGGGVGG), 140-202 (AAGA…RVRS), 244-266 (HASTSAATDPCATPSPSKKQKRL), 303-330 (PARPAAVSPPPPVKAQASPAKTRRCSFS), and 345-386 (RLSL…ISSR). Positions 170–180 (RARRAREKQSH) are enriched in basic residues. Over residues 181–193 (RGGAATRGADAAT) the composition is skewed to low complexity. Polar residues predominate over residues 375-386 (TVRTVSSKISSR).

As to expression, expressed in vegetative shoot tips consisting of leaf primordia and the bases of immature leaves, the shoot apical meristem, and unexpanded stem tissue. Strongly expressed in tissues enriched in dividing cells: ear primordia and embryos.

The protein localises to the cytoplasm. The protein resides in the cytoskeleton. It localises to the spindle. It is found in the phragmoplast. Is required for spatial control cell division during leaf development. Through an association with microtubules, acts both for the positioning of cytoskeletal arrays that establish planes of cell division during prophase and for spatial guidance of expanding phragmoplasts toward preestablished cortical division sites (CDS) during cytokinesis. This Zea mays (Maize) protein is Microtubule-binding protein TANGLED1 (TAN1).